We begin with the raw amino-acid sequence, 104 residues long: Large ribosomal subunit protein bL21 (104 aa).

It belongs to the bacterial ribosomal protein bL21 family. In terms of assembly, part of the 50S ribosomal subunit. Contacts protein L20.

Functionally, this protein binds to 23S rRNA in the presence of protein L20. This is Large ribosomal subunit protein bL21 from Granulibacter bethesdensis (strain ATCC BAA-1260 / CGDNIH1).